The chain runs to 507 residues: Phospho-2-dehydro-3-deoxyheptonate aldolase 2, chloroplastic (507 aa).

This sequence belongs to the class-II DAHP synthase family.

Its subcellular location is the plastid. It is found in the chloroplast. The catalysed reaction is D-erythrose 4-phosphate + phosphoenolpyruvate + H2O = 7-phospho-2-dehydro-3-deoxy-D-arabino-heptonate + phosphate. It functions in the pathway metabolic intermediate biosynthesis; chorismate biosynthesis; chorismate from D-erythrose 4-phosphate and phosphoenolpyruvate: step 1/7. The polypeptide is Phospho-2-dehydro-3-deoxyheptonate aldolase 2, chloroplastic (DHS2) (Arabidopsis thaliana (Mouse-ear cress)).